The chain runs to 298 residues: Cyclin-dependent kinase 2 (298 aa).

Positions 4-286 constitute a Protein kinase domain; sequence FQKVEKIGEG…AKNALVHRFF (283 aa). ATP-binding positions include 10–18, K33, 81–83, and D86; these read IGEGTYGVV and EFL. The residue at position 14 (T14) is a Phosphothreonine. Y15 carries the phosphotyrosine modification. Residue D127 is the Proton acceptor of the active site. ATP is bound by residues 129–132 and D145; that span reads KPQN. At T160 the chain carries Phosphothreonine; by CAK.

This sequence belongs to the protein kinase superfamily. CMGC Ser/Thr protein kinase family. CDC2/CDKX subfamily.

The enzyme catalyses L-seryl-[protein] + ATP = O-phospho-L-seryl-[protein] + ADP + H(+). The catalysed reaction is L-threonyl-[protein] + ATP = O-phospho-L-threonyl-[protein] + ADP + H(+). Its activity is regulated as follows. Phosphorylation at Thr-14 or Tyr-15 inactivates the enzyme, while phosphorylation at Thr-160 activates it. In terms of biological role, serine/threonine-protein kinase involved in the control of the cell cycle; essential for meiosis, but dispensable for mitosis. Triggers duplication of centrosomes and DNA. Acts at the G1-S transition to promote the E2F transcriptional program and the initiation of DNA synthesis, and modulates G2 progression; controls the timing of entry into mitosis/meiosis by controlling the subsequent activation of cyclin B/CDK1 by phosphorylation, and coordinates the activation of cyclin B/CDK1 at the centrosome and in the nucleus. Crucial role in orchestrating a fine balance between cellular proliferation, cell death, and DNA repair in embryonic stem cells (ESCs). Activity of CDK2 is maximal during S phase and G2; activated by interaction with cyclin E during the early stages of DNA synthesis to permit G1-S transition, and subsequently activated by cyclin A2 (cyclin A1 in germ cells) during the late stages of DNA replication to drive the transition from S phase to mitosis, the G2 phase. This is Cyclin-dependent kinase 2 (cdk2) from Carassius auratus (Goldfish).